Here is a 334-residue protein sequence, read N- to C-terminus: MLLIGVAGTELSAQERDWLQHDAVAGVVLFKRNFASRTQVAELSAAIRAAAPRPVLICVDQEGGRVQRFREGFSALAPLQSFGAQYAQDPEAALAAARAHAQLMASEVRASGVDLSFAPVVDLGRGNRAIGDRAFSDEPQIVATFTRAYVQALHGAGMAATLKHFPGHGTVLEDTHVDHASDPRPLEVLQAEDLVPFVAGIEAGADAVMMAHVVYPQVAPEPAGYSQRWIEQILRGQMGFRGVVFSDDIGMAASFSAGGVAGRVHAHLDAGCDVVLVCHPELVAESLQAVQGRSLNTAALIGLIGRGALGWDGLLAGTDASFTTPLSAHFGTTA.

Residues aspartate 60, arginine 68, arginine 133, and 163–164 (KH) each bind substrate. The Proton donor/acceptor role is filled by histidine 176. Aspartate 247 (nucleophile) is an active-site residue.

It belongs to the glycosyl hydrolase 3 family. NagZ subfamily.

Its subcellular location is the cytoplasm. The catalysed reaction is Hydrolysis of terminal non-reducing N-acetyl-D-hexosamine residues in N-acetyl-beta-D-hexosaminides.. The protein operates within cell wall biogenesis; peptidoglycan recycling. Plays a role in peptidoglycan recycling by cleaving the terminal beta-1,4-linked N-acetylglucosamine (GlcNAc) from peptide-linked peptidoglycan fragments, giving rise to free GlcNAc, anhydro-N-acetylmuramic acid and anhydro-N-acetylmuramic acid-linked peptides. This is Beta-hexosaminidase from Xanthomonas axonopodis pv. citri (strain 306).